Here is a 318-residue protein sequence, read N- to C-terminus: 2-desacetyl-2-hydroxyethyl bacteriochlorophyllide A dehydrogenase (318 aa).

Its pathway is porphyrin-containing compound metabolism; bacteriochlorophyll biosynthesis (light-independent). In terms of biological role, this protein catalyzes the penultimate step in bacteriochlorophyll a biosynthesis. The chain is 2-desacetyl-2-hydroxyethyl bacteriochlorophyllide A dehydrogenase (bchC) from Cereibacter sphaeroides (strain ATCC 17023 / DSM 158 / JCM 6121 / CCUG 31486 / LMG 2827 / NBRC 12203 / NCIMB 8253 / ATH 2.4.1.) (Rhodobacter sphaeroides).